An 84-amino-acid polypeptide reads, in one-letter code: Putative membrane protein insertion efficiency factor (84 aa).

Positions 61–84 (SQGFEDPLPPNTKRTNLTHGRQTK) are disordered. Polar residues predominate over residues 72-84 (TKRTNLTHGRQTK).

The protein belongs to the UPF0161 family.

Its subcellular location is the cell inner membrane. Could be involved in insertion of integral membrane proteins into the membrane. The chain is Putative membrane protein insertion efficiency factor from Leptospira borgpetersenii serovar Hardjo-bovis (strain JB197).